A 960-amino-acid chain; its full sequence is Collagenase ColA (960 aa).

A signal peptide spans 1–30 (MNKNLRFTQMMIGISTMALSFGSIQTQVSA). Residues 31-92 (EETAPYNILQ…KRDEIQLKQS (62 aa)) constitute a propeptide that is removed on maturation. The segment at 93-365 (YTLAELNKMP…AVEQMKTNYG (273 aa)) is activator domain. The interval 93-764 (YTLAELNKMP…VFHGVATEEK (672 aa)) is S1 metalloprotease domain. A catalytic subdomain region spans residues 375–644 (DLQKIREEGK…MQQLIDNQDK (270 aa)). Histidine 500 provides a ligand contact to Zn(2+). Glutamate 501 is a catalytic residue. Positions 504 and 532 each coordinate Zn(2+). The tract at residues 652–764 (NDYLIQHAPK…VFHGVATEEK (113 aa)) is helper subdomain. Residues 768–849 (TTIVNMNGPY…ESKEQTKVTV (82 aa)) form the PKD domain. Residues 836 to 845 (SRGKESKEQT) show a composition bias toward basic and acidic residues. Positions 836–859 (SRGKESKEQTKVTVKQDPQTSESY) are disordered. Residues 846–857 (KVTVKQDPQTSE) are compositionally biased toward polar residues. The tract at residues 852–960 (DPQTSESYEE…KNGEYSLLVK (109 aa)) is collagen-binding domain.

The protein belongs to the peptidase M9B family. Collagenase subfamily. It depends on Ca(2+) as a cofactor. Zn(2+) serves as cofactor.

The protein resides in the secreted. The catalysed reaction is Digestion of native collagen in the triple helical region at Xaa-|-Gly bonds. With synthetic peptides, a preference is shown for Gly at P3 and P1', Pro and Ala at P2 and P2', and hydroxyproline, Ala or Arg at P3'.. In terms of biological role, acts as a true collagenase, which is highly active and efficiently targets native tropocollagen. In vitro, can also cleave gelatin and the synthetic peptide FALGPA (furylacryloyl-Leu-Gly-Pro-Ala). May contribute to bacterial virulence in endophthalmitis or opportunistic infections via collagen degradation in the host extracellular matrix (ECM). This Bacillus cereus (strain ATCC 14579 / DSM 31 / CCUG 7414 / JCM 2152 / NBRC 15305 / NCIMB 9373 / NCTC 2599 / NRRL B-3711) protein is Collagenase ColA.